The following is a 301-amino-acid chain: Uricase-2 isozyme 2 (301 aa).

Residues lysine 17 and threonine 63 each act as charge relay system in the active site. Urate-binding residues include threonine 63, aspartate 64, phenylalanine 165, arginine 182, valine 237, glutamine 238, and asparagine 257. The active-site Charge relay system is the histidine 259. The Microbody targeting signal signature appears at 299-301 (SKL).

The protein belongs to the uricase family.

It is found in the peroxisome. It catalyses the reaction urate + O2 + H2O = 5-hydroxyisourate + H2O2. It functions in the pathway purine metabolism; urate degradation; (S)-allantoin from urate: step 1/3. Catalyzes the oxidation of uric acid to 5-hydroxyisourate, which is further processed to form (S)-allantoin. This chain is Uricase-2 isozyme 2, found in Canavalia lineata (Beach bean).